Reading from the N-terminus, the 406-residue chain is Phosphopentomutase (406 aa).

Mn(2+) is bound by residues Asp-10, Asp-305, His-310, Asp-346, His-347, and His-358.

This sequence belongs to the phosphopentomutase family. The cofactor is Mn(2+).

It localises to the cytoplasm. The catalysed reaction is 2-deoxy-alpha-D-ribose 1-phosphate = 2-deoxy-D-ribose 5-phosphate. It carries out the reaction alpha-D-ribose 1-phosphate = D-ribose 5-phosphate. It participates in carbohydrate degradation; 2-deoxy-D-ribose 1-phosphate degradation; D-glyceraldehyde 3-phosphate and acetaldehyde from 2-deoxy-alpha-D-ribose 1-phosphate: step 1/2. Its function is as follows. Isomerase that catalyzes the conversion of deoxy-ribose 1-phosphate (dRib-1-P) and ribose 1-phosphate (Rib-1-P) to deoxy-ribose 5-phosphate (dRib-5-P) and ribose 5-phosphate (Rib-5-P), respectively. The chain is Phosphopentomutase from Methylorubrum extorquens (strain PA1) (Methylobacterium extorquens).